The chain runs to 186 residues: ATP synthase subunit delta, cyanelle (186 aa).

It belongs to the ATPase delta chain family. F-type ATPases have 2 components, F(1) - the catalytic core - and F(0) - the membrane proton channel. F(1) has five subunits: alpha(3), beta(3), gamma(1), delta(1), epsilon(1). CF(0) has four main subunits: a(1), b(1), b'(1) and c(10-14). The alpha and beta chains form an alternating ring which encloses part of the gamma chain. F(1) is attached to F(0) by a central stalk formed by the gamma and epsilon chains, while a peripheral stalk is formed by the delta, b and b' chains.

It is found in the plastid. The protein localises to the cyanelle thylakoid membrane. In terms of biological role, f(1)F(0) ATP synthase produces ATP from ADP in the presence of a proton or sodium gradient. F-type ATPases consist of two structural domains, F(1) containing the extramembraneous catalytic core and F(0) containing the membrane proton channel, linked together by a central stalk and a peripheral stalk. During catalysis, ATP synthesis in the catalytic domain of F(1) is coupled via a rotary mechanism of the central stalk subunits to proton translocation. Functionally, this protein is part of the stalk that links CF(0) to CF(1). It either transmits conformational changes from CF(0) to CF(1) or is implicated in proton conduction. This Cyanophora paradoxa protein is ATP synthase subunit delta, cyanelle.